The sequence spans 301 residues: Pantothenate synthetase (301 aa).

Residue 30-37 (MGNLHEGH) coordinates ATP. Catalysis depends on H37, which acts as the Proton donor. Q61 is a (R)-pantoate binding site. Q61 is a binding site for beta-alanine. 149–152 (GEKD) provides a ligand contact to ATP. Position 155 (Q155) interacts with (R)-pantoate. Residues V178 and 186–189 (MSSR) contribute to the ATP site.

This sequence belongs to the pantothenate synthetase family. In terms of assembly, homodimer.

It localises to the cytoplasm. It carries out the reaction (R)-pantoate + beta-alanine + ATP = (R)-pantothenate + AMP + diphosphate + H(+). It participates in cofactor biosynthesis; (R)-pantothenate biosynthesis; (R)-pantothenate from (R)-pantoate and beta-alanine: step 1/1. In terms of biological role, catalyzes the condensation of pantoate with beta-alanine in an ATP-dependent reaction via a pantoyl-adenylate intermediate. The chain is Pantothenate synthetase from Vibrio vulnificus (strain YJ016).